Reading from the N-terminus, the 236-residue chain is Uridylate kinase (236 aa).

10–13 contributes to the ATP binding site; that stretch reads KLSG. Glycine 52 serves as a coordination point for UMP. Residues glycine 53 and arginine 57 each contribute to the ATP site. Residues aspartate 72 and 133 to 140 contribute to the UMP site; that span reads TGNPFFTT. Positions 160, 166, and 169 each coordinate ATP.

The protein belongs to the UMP kinase family. As to quaternary structure, homohexamer.

Its subcellular location is the cytoplasm. The enzyme catalyses UMP + ATP = UDP + ADP. It functions in the pathway pyrimidine metabolism; CTP biosynthesis via de novo pathway; UDP from UMP (UMPK route): step 1/1. Inhibited by UTP. Its function is as follows. Catalyzes the reversible phosphorylation of UMP to UDP. In Phocaeicola vulgatus (strain ATCC 8482 / DSM 1447 / JCM 5826 / CCUG 4940 / NBRC 14291 / NCTC 11154) (Bacteroides vulgatus), this protein is Uridylate kinase.